A 514-amino-acid polypeptide reads, in one-letter code: 2,3-bisphosphoglycerate-independent phosphoglycerate mutase (514 aa).

Aspartate 14 and serine 64 together coordinate Mn(2+). The active-site Phosphoserine intermediate is serine 64. Residues histidine 125, arginine 155–aspartate 156, arginine 187, arginine 193, arginine 263–arginine 266, and lysine 336 contribute to the substrate site. Aspartate 403, histidine 407, aspartate 444, histidine 445, and histidine 463 together coordinate Mn(2+).

The protein belongs to the BPG-independent phosphoglycerate mutase family. In terms of assembly, monomer. Requires Mn(2+) as cofactor.

The enzyme catalyses (2R)-2-phosphoglycerate = (2R)-3-phosphoglycerate. The protein operates within carbohydrate degradation; glycolysis; pyruvate from D-glyceraldehyde 3-phosphate: step 3/5. In terms of biological role, catalyzes the interconversion of 2-phosphoglycerate and 3-phosphoglycerate. The sequence is that of 2,3-bisphosphoglycerate-independent phosphoglycerate mutase from Enterobacter sp. (strain 638).